We begin with the raw amino-acid sequence, 312 residues long: Malate dehydrogenase (312 aa).

Residues 7 to 13 (GAAGGIG) and D34 contribute to the NAD(+) site. The substrate site is built by R81 and R87. NAD(+) is bound by residues N94 and 117–119 (ITN). 2 residues coordinate substrate: N119 and R153. The active-site Proton acceptor is H177. M227 serves as a coordination point for NAD(+).

The protein belongs to the LDH/MDH superfamily. MDH type 1 family. As to quaternary structure, homodimer.

It carries out the reaction (S)-malate + NAD(+) = oxaloacetate + NADH + H(+). Functionally, catalyzes the reversible oxidation of malate to oxaloacetate. The protein is Malate dehydrogenase of Citrobacter koseri (strain ATCC BAA-895 / CDC 4225-83 / SGSC4696).